We begin with the raw amino-acid sequence, 1423 residues long: uncharacterized protein (1423 aa).

The signal sequence occupies residues 1 to 28 (MTSSVRLAFLATLLLLLPLEAQIQQANS). Topologically, residues 29-1321 (ANVNQNVGQQ…RSREKQNFLT (1293 aa)) are extracellular. N-linked (GlcNAc...) asparagine glycosylation is found at Asn-94, Asn-306, Asn-355, Asn-483, Asn-666, and Asn-903. Positions 184-347 (SFFGQSASKA…GRYMFRVDDV (164 aa)) constitute an NIDO domain. The AMOP domain maps to 638–818 (VKKKSLEMCH…FRCQMFYWRR (181 aa)). Residues 1322 to 1342 (WLAIIGGIFGVLVFVILIFLC) form a helical membrane-spanning segment. The Cytoplasmic segment spans residues 1343–1423 (CWIVKQKKKG…EDLHGLKTSV (81 aa)). The interval 1364-1401 (SRSSMTGSRGGKKYPIHESEPLNEKRFDADTYRDDDFY) is disordered. Over residues 1378–1401 (PIHESEPLNEKRFDADTYRDDDFY) the composition is skewed to basic and acidic residues.

Its subcellular location is the membrane. This is an uncharacterized protein from Caenorhabditis elegans.